The primary structure comprises 408 residues: NADH-quinone oxidoreductase subunit H (408 aa).

Helical transmembrane passes span 18-38 (LAKAVAIFVFLLLTVLSAILI), 84-104 (PIYLLAPVISVIPAFVAFSVI), 124-144 (LPVAVLFILAATSIGVYGIVL), 165-185 (VVSYEIAMGLSFVAVFLYAGT), 198-218 (TWFVFLLLPSFLVYVVSMVGE), 261-281 (SALATTMFLGGWHAPFPFNLI), 288-308 (WWPLLWFTAKVWTFMFLYFWL), 321-341 (MALGWKVLIPVSLLWIMVVAI), and 353-373 (WAAWLLTAAVVVVVALIWGLA). Residues 381-408 (VQPPPPQSTGAYPVPPLPSVGTKETADA) are disordered. Over residues 382–398 (QPPPPQSTGAYPVPPLP) the composition is skewed to pro residues.

It belongs to the complex I subunit 1 family. As to quaternary structure, NDH-1 is composed of 14 different subunits. Subunits NuoA, H, J, K, L, M, N constitute the membrane sector of the complex.

It is found in the cell membrane. It carries out the reaction a quinone + NADH + 5 H(+)(in) = a quinol + NAD(+) + 4 H(+)(out). Its function is as follows. NDH-1 shuttles electrons from NADH, via FMN and iron-sulfur (Fe-S) centers, to quinones in the respiratory chain. The immediate electron acceptor for the enzyme in this species is believed to be menaquinone. Couples the redox reaction to proton translocation (for every two electrons transferred, four hydrogen ions are translocated across the cytoplasmic membrane), and thus conserves the redox energy in a proton gradient. This subunit may bind ubiquinone. The chain is NADH-quinone oxidoreductase subunit H from Mycolicibacterium smegmatis (strain ATCC 700084 / mc(2)155) (Mycobacterium smegmatis).